A 200-amino-acid polypeptide reads, in one-letter code: MTIRYPNGKRYNQASQPHKTPIKKHTYSNRGMSLEEELNETNEYYLTHNIACVHKKPTPLQIVKVDYPARSAAVVKEAYFKQPSTTDYNGVYKGKYIDFEAKETKNKTSFPLQNFHLHQIEHMKQVIAHNGIAFVIIKFTLFDELYLLDAKHIITFWNRQNTGGRKSITKEEIVEHGSLLSCGYHPRIDYIRVLDTVYFS.

The interval 1–25 (MTIRYPNGKRYNQASQPHKTPIKKH) is disordered. Residues T85, D87, E100, and Q119 each contribute to the Mg(2+) site.

The protein belongs to the RecU family. The cofactor is Mg(2+).

Its subcellular location is the cytoplasm. The enzyme catalyses Endonucleolytic cleavage at a junction such as a reciprocal single-stranded crossover between two homologous DNA duplexes (Holliday junction).. In terms of biological role, endonuclease that resolves Holliday junction intermediates in genetic recombination. Cleaves mobile four-strand junctions by introducing symmetrical nicks in paired strands. Promotes annealing of linear ssDNA with homologous dsDNA. Required for DNA repair, homologous recombination and chromosome segregation. The chain is Holliday junction resolvase RecU from Bacillus cereus (strain ZK / E33L).